A 101-amino-acid chain; its full sequence is Large ribosomal subunit protein uL23 (101 aa).

It belongs to the universal ribosomal protein uL23 family. Part of the 50S ribosomal subunit. Contacts protein L29, and trigger factor when it is bound to the ribosome.

Functionally, one of the early assembly proteins it binds 23S rRNA. One of the proteins that surrounds the polypeptide exit tunnel on the outside of the ribosome. Forms the main docking site for trigger factor binding to the ribosome. The polypeptide is Large ribosomal subunit protein uL23 (Mannheimia succiniciproducens (strain KCTC 0769BP / MBEL55E)).